The sequence spans 815 residues: MAASTLPSGLSTNDLIRRTANPHPNVWGYDLLCSLKSPYSRDSSYKERADTLINEIKAMLGAAFGDGKEMITPSAYDTAWVARIPSIDGSSGSARPQFPQTVDWILKNQLKDGSWGTESHFLLSEPLLATISCVLALFKWQVGDLQVERGIEFLKSSLEKIKNESDQDSLVTDFEIIFPSMLREAQSLHLGLPYDLPYIQLLQTKRQERLANLSREKIHGGILQLSSLEGIEDMVEWERLMDLQSLDGSFLSSPASTAFVFIHTGDLKCLAFLNSVLAKFGAFVPCLYHVDLLERLLIVDNIERLGIDRHFEKEINEALDYVYRYWSNERGIGWGRMNATADLETTALGFRLLRLHRYHVSPVVFKKFKDADGEFLSSIGQFNKDVASMLNLYRACELAFPGENILDEAKGFTAKYLREALEKTETFSSWNIKRNLSQEIKYALKTSWHASIPRVEAKRYCQVYRPDYARLDKSVYKLHHVNNEKILELAKLDFNIIQSILQEEMKNVTSWFRDSGLPLFSFARQRPLEFYFLITAGTYEPRYAKCRLLFTKVACVETVLDDMYDTYGTLDELKLFTQAVRRWDPSLTENLPDYMKRCYKIFYDIVHEAAWEAEKEQGRELVSFLRKAWEDFVLSYHEEAEWLSAEYVPGFDEYIKNGITSIGQRVLLLSGLLVMDGQLLSQKALEKIDYPERSRVLMEQICLISRLADDTQSYKAEKARGELASGIECYMKDHPECTEEEALNHIYGIMEVTAKELTKEYLKVDDDDVPFACKKMLFEETRVTMVIFKDGDRLSNSKLEMKDHFKECLIEPLPL.

Aspartate 561, aspartate 565, aspartate 709, and glutamate 717 together coordinate Mg(2+). The DDXXD motif signature appears at 561 to 565; the sequence is DDMYD.

It belongs to the terpene synthase family. Tpsd subfamily. Mg(2+) is required as a cofactor. The cofactor is Mn(2+).

Its subcellular location is the cytoplasm. It carries out the reaction (2E,6E)-farnesyl diphosphate = (E)-gamma-bisabolene + diphosphate. It participates in terpene metabolism; oleoresin biosynthesis. In terms of biological role, involved in defensive oleoresin formation in conifers in response to insect attack or other injury. Involved in sesquiterpene (C15) olefins biosynthesis. Produces mainly (E)-gamma-bisabolene when used with farnesyl diphosphate as substrate. No activity with geranyl diphosphate or geranylgeranyl diphosphate. The chain is (E)-gamma-bisabolene synthase (TPS3) from Pseudotsuga menziesii (Douglas-fir).